A 213-amino-acid polypeptide reads, in one-letter code: 3-demethoxyubiquinol 3-hydroxylase (213 aa).

Fe cation-binding residues include Glu-62, Glu-92, His-95, Glu-144, Glu-176, and His-179.

It belongs to the COQ7 family. Fe cation is required as a cofactor.

The protein localises to the cell membrane. It carries out the reaction a 5-methoxy-2-methyl-3-(all-trans-polyprenyl)benzene-1,4-diol + AH2 + O2 = a 3-demethylubiquinol + A + H2O. It functions in the pathway cofactor biosynthesis; ubiquinone biosynthesis. Functionally, catalyzes the hydroxylation of 2-nonaprenyl-3-methyl-6-methoxy-1,4-benzoquinol during ubiquinone biosynthesis. This is 3-demethoxyubiquinol 3-hydroxylase from Legionella pneumophila subsp. pneumophila (strain Philadelphia 1 / ATCC 33152 / DSM 7513).